The sequence spans 347 residues: Cell shape-determining protein MreB (347 aa).

ATP is bound by residues 19–21, 165–167, 213–216, and 295–298; these read TAN, GGT, ERIK, and GGAL.

Belongs to the FtsA/MreB family. Forms polymers in the presence of ATP. Forms pairs of protofilaments that adopt an antiparallel arrangement and bind to lipids.

The protein localises to the cytoplasm. Forms membrane-associated dynamic filaments that are essential for cell shape determination. Acts by regulating cell wall synthesis and cell elongation, and thus cell shape. A feedback loop between cell geometry and MreB localization may maintain elongated cell shape by targeting cell wall growth to regions of negative cell wall curvature. Required for mid-cell peptidoglycan synthesis and cell division. Directs the localization of the cytosolic peptidoglycan precursor-synthesizing enzyme MurG. Also required for proper chromosome segregation. Directs the segregation of origin-proximal but not origin-distal loci. In Caulobacter vibrioides (strain NA1000 / CB15N) (Caulobacter crescentus), this protein is Cell shape-determining protein MreB.